The chain runs to 204 residues: MALKEIVEQTVAGLGYDLVEIERSAGGLLRITIDLPWVPGTAGSEAEQFVTVEDCEKVTRQLLFALEVDGVDYKRLEVSSPGIDRPLRHGQDFERFVGREIDVTLKAPIGAAAGALVNATRKKFRGTLERTQSSNGESGVVPGWQIVWSDAPEVKPGQRVSKKRLPAPLQALGFTLDELKEARLAPIVSFKGRGAKAGTEPNLD.

The protein belongs to the RimP family.

It is found in the cytoplasm. Its function is as follows. Required for maturation of 30S ribosomal subunits. The polypeptide is Ribosome maturation factor RimP (Albidiferax ferrireducens (strain ATCC BAA-621 / DSM 15236 / T118) (Rhodoferax ferrireducens)).